The chain runs to 99 residues: NADH-quinone oxidoreductase subunit K (99 aa).

3 helical membrane-spanning segments follow: residues 3 to 23 (PENY…GVLL), 28 to 48 (IVVF…FVTF), and 62 to 82 (FFTM…IMII).

The protein belongs to the complex I subunit 4L family. As to quaternary structure, NDH-1 is composed of 14 different subunits. Subunits NuoA, H, J, K, L, M, N constitute the membrane sector of the complex.

It localises to the cell membrane. The enzyme catalyses a quinone + NADH + 5 H(+)(in) = a quinol + NAD(+) + 4 H(+)(out). Functionally, NDH-1 shuttles electrons from NADH, via FMN and iron-sulfur (Fe-S) centers, to quinones in the respiratory chain. The immediate electron acceptor for the enzyme in this species is believed to be a menaquinone. Couples the redox reaction to proton translocation (for every two electrons transferred, four hydrogen ions are translocated across the cytoplasmic membrane), and thus conserves the redox energy in a proton gradient. This is NADH-quinone oxidoreductase subunit K from Rhodococcus erythropolis (strain PR4 / NBRC 100887).